The primary structure comprises 547 residues: ATP synthase subunit alpha (547 aa).

172-179 (GDRKTGKT) contacts ATP.

It belongs to the ATPase alpha/beta chains family. As to quaternary structure, F-type ATPases have 2 components, CF(1) - the catalytic core - and CF(0) - the membrane proton channel. CF(1) has five subunits: alpha(3), beta(3), gamma(1), delta(1), epsilon(1). CF(0) has three main subunits: a(1), b(2) and c(9-12). The alpha and beta chains form an alternating ring which encloses part of the gamma chain. CF(1) is attached to CF(0) by a central stalk formed by the gamma and epsilon chains, while a peripheral stalk is formed by the delta and b chains.

It localises to the cell membrane. It carries out the reaction ATP + H2O + 4 H(+)(in) = ADP + phosphate + 5 H(+)(out). Produces ATP from ADP in the presence of a proton gradient across the membrane. The alpha chain is a regulatory subunit. The chain is ATP synthase subunit alpha from Rhodococcus opacus (strain B4).